The primary structure comprises 389 residues: Type III polyketide synthase 21 (389 aa).

The Nucleophile role is filled by cysteine 170.

Belongs to the thiolase-like superfamily. Chalcone/stilbene synthases family. In terms of tissue distribution, expressed in anthers. Expressed in young and adult flowers.

In terms of biological role, plant type III polyketide synthases (PKSs) that catalyzes the condensation of fatty acyl-CoA with malonyl-CoA to generate triketide and tetraketide alpha-pyrones, the main components of pollen exine and potential sporopollenin precursors. In Oryza sativa subsp. japonica (Rice), this protein is Type III polyketide synthase 21 (PKS21).